The primary structure comprises 533 residues: Acid-sensing ion channel 3 (533 aa).

The Cytoplasmic segment spans residues 1-19 (MKPRSGLEEAQRRQASDIR). Residues 20-40 (VFASSCTMHGLGHIFGPGGLT) traverse the membrane as a helical segment. A Phosphothreonine; by PKC modification is found at threonine 40. Over 41 to 435 (LRRGLWATAV…EQKAAYEVSE (395 aa)) the chain is Extracellular. Intrachain disulfides connect cysteine 93-cysteine 187, cysteine 165-cysteine 172, cysteine 283-cysteine 372, cysteine 317-cysteine 368, cysteine 321-cysteine 366, cysteine 330-cysteine 352, and cysteine 332-cysteine 344. Asparagine 176 carries an N-linked (GlcNAc...) asparagine glycan. The interval 286–310 (ASLDPDDFDPEPSDPLGSPRPRPSP) is disordered. N-linked (GlcNAc...) asparagine glycosylation occurs at asparagine 400. The chain crosses the membrane as a helical span at residues 436–456 (LLGDIGGQMGLFIGASLLTIL). The GAS motif; ion selectivity filter motif lies at 449–451 (GAS). Over 457–533 (EILDYLCEVF…HRTCYLVTRL (77 aa)) the chain is Cytoplasmic. Serine 523 carries the post-translational modification Phosphoserine; by PKC. The short motif at 530 to 533 (VTRL) is the PDZ-binding element.

The protein belongs to the amiloride-sensitive sodium channel (TC 1.A.6) family. ASIC3 subfamily. In terms of assembly, can form homotrimeric channels. Heterotrimer; forms functional heterotrimers producing channel with different properties. Forms heterotrimers with ASIC2; gives rise to a biphasic current with a sustained current which discriminates poorly between Na(+) and K(+). Interacts with STOM; inhibits ASIC3 acid-evoked current. Interacts with LIN7B (via PDZ domain); increases ASIC3 expression at the plasma membrane. Interacts with MAGI1 (via PDZ domain); probably regulates ASIC3. Interacts with GOPC (via PDZ domain); probably regulates ASIC3. Interacts with DLG4 (via PDZ domain); reduces ASIC3 expression at the plasma membrane. Post-translationally, could be phosphorylated by PKC, promoting activation of ASIC2/ASIC3 heterotrimers. In terms of tissue distribution, expressed in sciatic nerve and dorsal root ganglion (at protein level). Expressed in sensory neurons of dorsal root ganglion. Expressed in Golgi interneurons in the granular layer. Also found in superior cervical ganglia, spinal cord and brain stem.

The protein localises to the cell membrane. It is found in the cytoplasm. The enzyme catalyses Na(+)(in) = Na(+)(out). It carries out the reaction K(+)(in) = K(+)(out). The catalysed reaction is Ca(2+)(in) = Ca(2+)(out). Inhibited by the diuretic drug amiloride. Inhibited by gadolinium ions. Inhibited by extracellular Ca(2+). Activated by lactate. Salicylic acid, diclofenac and aspirin inhibit the sustained current component. Activated by the vertebrate neuropeptides NPFF and NPSF, and the related FMRFamide. Specifically and reversibly inhibited by the a sea anemone toxin APETx2. ASIC3-containing channels are potentiated by the cono-RFamide CNF-Tx1.1, and probably CNF-Tx1.2 and CNF-Tx1.3 (AC P0DL71). Its function is as follows. Forms pH-gated heterotrimeric sodium channels that act as postsynaptic excitatory receptors in the nervous system. Upon extracellular acidification, these channels generate a biphasic current with a fast inactivating and a slow sustained phase. ASIC3 is more sensitive to protons and gates between closed, open, and desensitized states faster than other ASICs. Displays high selectivity for sodium ions but can also permit the permeation of other cations. As a neuronal acid sensor, probably contributes to mechanoreception, acid nociception, and heat nociception. By forming heterotrimeric channels with ASIC2, generates a biphasic current with a fast inactivating and a slow sustained phase, which in sensory neurons is proposed to mediate the pain induced by acidosis that occurs in ischemic, damaged or inflamed tissues. This chain is Acid-sensing ion channel 3, found in Rattus norvegicus (Rat).